Reading from the N-terminus, the 216-residue chain is 2',3'-cyclic-nucleotide 3'-phosphodiesterase (216 aa).

Histidine 39 (proton donor/acceptor) is an active-site residue. Threonine 41 contributes to the substrate binding site. The Proton donor/acceptor role is filled by histidine 153. Positions 155 and 158 each coordinate substrate.

This sequence belongs to the 2H phosphoesterase superfamily. CPD1 family.

The protein resides in the golgi apparatus. It catalyses the reaction a nucleoside 2',3'-cyclic phosphate + H2O = a nucleoside 2'-phosphate + H(+). Functionally, involved in the metabolism of ADP-ribose 1',2'-cyclic phosphate which is produced as a consequence of tRNA splicing. The protein is 2',3'-cyclic-nucleotide 3'-phosphodiesterase (CPD1) of Yarrowia lipolytica (strain CLIB 122 / E 150) (Yeast).